Consider the following 314-residue polypeptide: Oxidoreductase NAD-binding domain-containing protein 1 (314 aa).

A signal peptide spans 1 to 18 (MALVAGSAAYQVLRGVTG). The FAD-binding FR-type domain maps to 63–166 (EIISPAKVCG…VGGEFCFDPQ (104 aa)). 180–185 (GVGINP) contributes to the NAD(+) binding site.

This chain is Oxidoreductase NAD-binding domain-containing protein 1 (oxnad1), found in Xenopus laevis (African clawed frog).